The following is a 513-amino-acid chain: Putative ATP-dependent RNA helicase QP509L (513 aa).

The Helicase ATP-binding domain occupies 110–262 (KKLLSPYGRF…KIIIHHLGQP (153 aa)). 123-130 (LNTGLGKT) contacts ATP. A DEAH box motif is present at residues 215–218 (DEAH).

The protein belongs to the DEAD box helicase family. DEAH subfamily.

The catalysed reaction is ATP + H2O = ADP + phosphate + H(+). This is Putative ATP-dependent RNA helicase QP509L from Ornithodoros (relapsing fever ticks).